The sequence spans 133 residues: Protein PROTON GRADIENT REGULATION 5, chloroplastic (133 aa).

The transit peptide at 1-60 (MAAASISAIGCNQTLIGTSFYGGWGSSISGEDYQTMLSKTVAPPQQARVSRKAIRAVPMM) directs the protein to the chloroplast.

Belongs to the PGR5 family. Interacts with PGRL1A and PGRL1B. In terms of processing, disulfide bonds; Cys-11 and Cys-105 are probably involved in the formation of disulfide bridges with 'Cys-300' and 'Cys-303' of PGRL1A. 'Cys-272' and 'Cys-275' of PGRL1A may also be used to form the disulfide bridges, but in this case the cyclic electron flow is lost.

It is found in the plastid. The protein resides in the chloroplast thylakoid membrane. Functionally, critical for growth under fluctuating-light conditions. Involved in the regulation of the cyclic electron flow (CEF) around Photosystem I. Essential for the reduction of PGRL1A by ferredoxin and for photoprotection. Contributes to maximize photosynthesis efficiency after a long dark adaptation via the regulation of non-photochemical quenching (NPQ); acts independently from DLDG1. Promotes the induction of steady-state proton motive force (pmf) and energy-dependent quenching (qE). The sequence is that of Protein PROTON GRADIENT REGULATION 5, chloroplastic from Arabidopsis thaliana (Mouse-ear cress).